Reading from the N-terminus, the 204-residue chain is CLAVATA3/ESR (CLE)-related protein 1 (204 aa).

Residues M1 to A21 form the signal peptide. The tract at residues A21–M83 is required for secretion from the host cytoplasm to the host apoplasm. N-linked (GlcNAc...) asparagine glycosylation is present at N32. The interval R116 to R204 is disordered. Basic and acidic residues-rich tracts occupy residues L139–R151, L160–R172, and L181–R193. 3 propeptides (removed in mature form) span residues R142–K150, R163–K171, and R184–K192.

This sequence belongs to the CLV3/ESR signal peptide family. Preprocessing of the precursor by host proteases leads first to the production of 21-mer CLE-containing peptides (Arg-130 to Lys-150, Arg-151 to Lys-171 and Arg-172 to Lys-192) followed by an ultimate C-term trimming to give the mature 12-mer CLE1-1 peptide. Highly expressed exclusively within the dorsal esophageal gland cell during syncytium formation in host plants.

Its subcellular location is the secreted. The protein resides in the host cytoplasm. The protein localises to the host extracellular space. It is found in the extracellular space. It localises to the apoplast. Its function is as follows. Mimics host plant CLE extracellular signal peptides that regulate cell fate. May play a role in the differentiation or division of feeding cells (syncytia) induced in plant roots during infection. The polypeptide is CLAVATA3/ESR (CLE)-related protein 1 (Globodera rostochiensis (Golden nematode worm)).